Reading from the N-terminus, the 212-residue chain is Thiamine-phosphate synthase (212 aa).

4-amino-2-methyl-5-(diphosphooxymethyl)pyrimidine is bound by residues 39-43 (QLREK) and N71. 2 residues coordinate Mg(2+): D72 and D91. Residue S110 coordinates 4-amino-2-methyl-5-(diphosphooxymethyl)pyrimidine. 137–139 (TPT) contributes to the 2-[(2R,5Z)-2-carboxy-4-methylthiazol-5(2H)-ylidene]ethyl phosphate binding site. Position 140 (K140) interacts with 4-amino-2-methyl-5-(diphosphooxymethyl)pyrimidine. G168 is a 2-[(2R,5Z)-2-carboxy-4-methylthiazol-5(2H)-ylidene]ethyl phosphate binding site.

This sequence belongs to the thiamine-phosphate synthase family. The cofactor is Mg(2+).

The catalysed reaction is 2-[(2R,5Z)-2-carboxy-4-methylthiazol-5(2H)-ylidene]ethyl phosphate + 4-amino-2-methyl-5-(diphosphooxymethyl)pyrimidine + 2 H(+) = thiamine phosphate + CO2 + diphosphate. The enzyme catalyses 2-(2-carboxy-4-methylthiazol-5-yl)ethyl phosphate + 4-amino-2-methyl-5-(diphosphooxymethyl)pyrimidine + 2 H(+) = thiamine phosphate + CO2 + diphosphate. It carries out the reaction 4-methyl-5-(2-phosphooxyethyl)-thiazole + 4-amino-2-methyl-5-(diphosphooxymethyl)pyrimidine + H(+) = thiamine phosphate + diphosphate. The protein operates within cofactor biosynthesis; thiamine diphosphate biosynthesis; thiamine phosphate from 4-amino-2-methyl-5-diphosphomethylpyrimidine and 4-methyl-5-(2-phosphoethyl)-thiazole: step 1/1. In terms of biological role, condenses 4-methyl-5-(beta-hydroxyethyl)thiazole monophosphate (THZ-P) and 2-methyl-4-amino-5-hydroxymethyl pyrimidine pyrophosphate (HMP-PP) to form thiamine monophosphate (TMP). The polypeptide is Thiamine-phosphate synthase (Acidothermus cellulolyticus (strain ATCC 43068 / DSM 8971 / 11B)).